Consider the following 562-residue polypeptide: Pyruvate kinase isozyme G, chloroplastic (562 aa).

A substrate-binding site is contributed by R121. N123, S125, D156, and T157 together coordinate K(+). Position 123-126 (123-126 (NMSH)) interacts with ATP. E308 contacts Mg(2+). Residues G331, D332, and T364 each coordinate substrate. Residue D332 participates in Mg(2+) binding.

Belongs to the pyruvate kinase family. Homotetramer. It depends on Mg(2+) as a cofactor. K(+) is required as a cofactor. In terms of tissue distribution, highest levels in leaves. Also found in stems, roots and flowers.

It localises to the plastid. Its subcellular location is the chloroplast. The enzyme catalyses pyruvate + ATP = phosphoenolpyruvate + ADP + H(+). The protein operates within carbohydrate degradation; glycolysis; pyruvate from D-glyceraldehyde 3-phosphate: step 5/5. This Nicotiana tabacum (Common tobacco) protein is Pyruvate kinase isozyme G, chloroplastic.